A 300-amino-acid chain; its full sequence is 1D-myo-inositol 2-acetamido-2-deoxy-alpha-D-glucopyranoside deacetylase (300 aa).

Zn(2+)-binding residues include H13, D16, and H147.

The protein belongs to the MshB deacetylase family. It depends on Zn(2+) as a cofactor.

It catalyses the reaction 1D-myo-inositol 2-acetamido-2-deoxy-alpha-D-glucopyranoside + H2O = 1D-myo-inositol 2-amino-2-deoxy-alpha-D-glucopyranoside + acetate. Catalyzes the deacetylation of 1D-myo-inositol 2-acetamido-2-deoxy-alpha-D-glucopyranoside (GlcNAc-Ins) in the mycothiol biosynthesis pathway. The protein is 1D-myo-inositol 2-acetamido-2-deoxy-alpha-D-glucopyranoside deacetylase of Mycobacterium avium (strain 104).